The sequence spans 435 residues: MENVCFQQRLRDLETRVRKWKFLKLGLTEVRLRPRDRRSTSVDQKHKECSSTSSSPQHQRPNNIGYLTSPMERKFTPLSMKPSPSRRDTEKDALEYEFLEGYKKSGTLEIDGEKQVVDPNEIHIISLLGSGSCGVVESATVRSKLMAVKTMYKNDNKENLKRILRDVRIMSMCNSPFIVTSYGYFMFDSSVKICMQIMSACCEKLLRRIYHSKLDFFPEFVAGHIVYSAISALDYLKEKHSIIHRDIKPSNILFDDSGNVKLCDFGISGFMTDSMAHSKSAGCPPYMAPERLTIETNSKYDVRSDVWSLGITVYQLVTGLYPFPLNDMEFTTLTIIANLNLPSPSLREETKRSFSPLFIEFLDLCLRKDVRERPEYRQLMKHDFYLDYDPASGSAYKFKAINGKCNQVADWFVDVIRLSKTEDELKSIPNTPCVN.

A compositionally biased stretch (basic and acidic residues) spans 35-49; it reads RDRRSTSVDQKHKEC. Residues 35–90 form a disordered region; the sequence is RDRRSTSVDQKHKECSSTSSSPQHQRPNNIGYLTSPMERKFTPLSMKPSPSRRDTE. Over residues 50–66 the composition is skewed to polar residues; it reads SSTSSSPQHQRPNNIGY. One can recognise a Protein kinase domain in the interval 122-385; the sequence is IHIISLLGSG…YRQLMKHDFY (264 aa). ATP-binding positions include 128-136 and Lys-149; that span reads LGSGSCGVV. Asp-246 (proton acceptor) is an active-site residue.

Belongs to the protein kinase superfamily. STE Ser/Thr protein kinase family. MAP kinase kinase subfamily. As to quaternary structure, interacts with unc-16. Requires Mg(2+) as cofactor. In terms of tissue distribution, expressed in most neurons, including nerve ring, head ganglions, dorsal and ventral nerve cords and tail ganglions.

The protein resides in the cytoplasm. It localises to the perikaryon. The protein localises to the cell projection. Its subcellular location is the axon. It carries out the reaction L-seryl-[protein] + ATP = O-phospho-L-seryl-[protein] + ADP + H(+). It catalyses the reaction L-threonyl-[protein] + ATP = O-phospho-L-threonyl-[protein] + ADP + H(+). The catalysed reaction is L-tyrosyl-[protein] + ATP = O-phospho-L-tyrosyl-[protein] + ADP + H(+). Functionally, dual specificity protein kinase which acts as an essential component of the JNK signal transduction pathway. May phosphorylate jnk-1. Plays a role in coordinating locomotion via D-type GABAergic motoneurons and in regulating synaptic vesicle transport downstream of adapter protein unc-16 and probably by activating jnk-1. Positively regulates lifespan. Upon environmental stress such as heat stress regulates daf-16 nuclear translocation probably by activating jnk-1. Regulates germline cell apoptosis in response to heavy metals such as Cu(2+) and to arsenite. The chain is Dual specificity mitogen-activated protein kinase kinase jkk-1 from Caenorhabditis elegans.